The chain runs to 1165 residues: Linoleate diol synthase (1165 aa).

Residues 104–448 (TDGLINDLWD…DGAFDDTELV (345 aa)) are fatty acid alpha-dioxygenase. Histidine 203 is a heme b binding site. 5 residues coordinate Ca(2+): aspartate 204, serine 219, tyrosine 221, aspartate 223, and serine 225. Residue tyrosine 376 is part of the active site. Histidine 379 serves as a coordination point for heme b. Residues 666 to 1161 (EVLSNQKDYK…ATTMKINWEG (496 aa)) form an epoxy alcohol synthase region. Residue cysteine 1080 participates in heme binding. The interval 1114–1134 (RSYPASQWPGQAGRPPRDPAW) is disordered.

The protein belongs to the peroxidase family. As to quaternary structure, homotetramer. Heme b is required as a cofactor. The cofactor is Ca(2+). Heme serves as cofactor. Post-translationally, the N-terminus is blocked.

The catalysed reaction is (9Z,12Z)-octadecadienoate + O2 = (8R,9Z,12Z)-8-hydroperoxyoctadeca-9,12-dienoate. The enzyme catalyses (8R,9Z,12Z)-8-hydroperoxyoctadeca-9,12-dienoate = (7S,8S,9Z,12Z)-7,8-dihydroxyoctadeca-9,12-dienoate. Its function is as follows. 7,8-linoleate diol synthase is a bifunctional enzyme that converts linoleic acid (18:2n-6) into 8-hydroperoxy-8(E),12(Z)-octadecadienoic acid (8-HPODE) and then catalyzes the isomerization of the resulting hydroperoxide to 7,8-dihydroxy-9(Z),12(Z)-octadecadienoic acid (7,8-DiHODE). The chain is Linoleate diol synthase from Gaeumannomyces graminis (Turf grass take-all root rot fungus).